The chain runs to 356 residues: Peptide chain release factor 1 (356 aa).

Gln232 carries the post-translational modification N5-methylglutamine. Residues 281–301 (ERQSSELSADRKAQVGSGDRS) are disordered.

The protein belongs to the prokaryotic/mitochondrial release factor family. Post-translationally, methylated by PrmC. Methylation increases the termination efficiency of RF1.

It is found in the cytoplasm. In terms of biological role, peptide chain release factor 1 directs the termination of translation in response to the peptide chain termination codons UAG and UAA. In Desulfovibrio desulfuricans (strain ATCC 27774 / DSM 6949 / MB), this protein is Peptide chain release factor 1.